The primary structure comprises 546 residues: Undecaprenyl phosphate-alpha-4-amino-4-deoxy-L-arabinose arabinosyl transferase (546 aa).

12 consecutive transmembrane segments (helical) span residues 6–26, 87–107, 113–133, 177–197, 208–228, 260–280, 289–309, 313–333, 345–365, 380–400, 410–430, and 450–467; these read INLAVIVPLFFIMLYLLPLGL, AASAFSTLGAAFCLFLLVGRF, AWVTVSVFLSLFLVSNLGTYS, LLTKGFLALALPVIVVVPFMI, WGWWVMLVALIVTLPWALAIH, YYLPYLLLGTLPWLFLAPSAI, SPLLRYALLWALIPFIFFSAA, LVTYILPCMAPLAIILAQGII, IGSVINCAFFSLISVAVIVLF, PWLLVVVCGSWAVLAYISIKA, YMLMPLSLFLLAWAIIPNISI, and AILIADYPSTMSAFNWYF.

This sequence belongs to the glycosyltransferase 83 family.

It is found in the cell inner membrane. It catalyses the reaction 4-amino-4-deoxy-alpha-L-arabinopyranosyl di-trans,octa-cis-undecaprenyl phosphate + lipid IVA = lipid IIA + di-trans,octa-cis-undecaprenyl phosphate.. It functions in the pathway lipopolysaccharide metabolism; 4-amino-4-deoxy-beta-L-arabinose-lipid A biosynthesis. Its function is as follows. Catalyzes the transfer of the L-Ara4N moiety of the glycolipid undecaprenyl phosphate-alpha-L-Ara4N to lipid A. The modified arabinose is attached to lipid A and is required for resistance to polymyxin and cationic antimicrobial peptides. The chain is Undecaprenyl phosphate-alpha-4-amino-4-deoxy-L-arabinose arabinosyl transferase from Shewanella sediminis (strain HAW-EB3).